The chain runs to 189 residues: uncharacterized protein (189 aa).

One can recognise an HTH tetR-type domain in the interval 2 to 62 (RPTNKRILDA…ALLSQHSSNR (61 aa)). Residues 25-44 (TTKEIAEKANVSEATIFRNF) constitute a DNA-binding region (H-T-H motif).

This is an uncharacterized protein from Bacillus subtilis (strain 168).